The sequence spans 166 residues: Phosphopantetheine adenylyltransferase (166 aa).

Substrate is bound at residue serine 8. ATP is bound by residues 8 to 9 (SF) and histidine 16. Substrate contacts are provided by lysine 40, threonine 72, and arginine 86. Residues 87–89 (GLR), glutamate 97, and 122–128 (HSFLSSS) each bind ATP.

Belongs to the bacterial CoaD family. As to quaternary structure, homohexamer. Mg(2+) serves as cofactor.

The protein resides in the cytoplasm. It catalyses the reaction (R)-4'-phosphopantetheine + ATP + H(+) = 3'-dephospho-CoA + diphosphate. The protein operates within cofactor biosynthesis; coenzyme A biosynthesis; CoA from (R)-pantothenate: step 4/5. Functionally, reversibly transfers an adenylyl group from ATP to 4'-phosphopantetheine, yielding dephospho-CoA (dPCoA) and pyrophosphate. The chain is Phosphopantetheine adenylyltransferase from Synechococcus sp. (strain RCC307).